Consider the following 285-residue polypeptide: MTENKAENKQTEKTEKMEVNIIIISDSAGETAFNNAQAAAVQFPDAEVNYRRYPFIVNEKKLAATLEEIEQYPNLVIVYSMLDEKLQLPIIKFAREHKARYIDILSPIIEAISQTTHMKPTGLVGANHQLTNKYFNRISAMEFAVMYDDGKDPRGFLEADVVLLGVSRTSKTPLSLLLANKGLKVANLPLVPQTHIPKEIYQIDPTKIIGLTTDPQVLNRIRRQRMISYGMDPDTAYSNMDSINAELDSAMALYKKLGCFVINVAERSIEETAALIMNHLSYEED.

165-172 (GVSRTSKT) contributes to the ADP binding site.

It belongs to the pyruvate, phosphate/water dikinase regulatory protein family. PDRP subfamily.

It carries out the reaction N(tele)-phospho-L-histidyl/L-threonyl-[pyruvate, phosphate dikinase] + ADP = N(tele)-phospho-L-histidyl/O-phospho-L-threonyl-[pyruvate, phosphate dikinase] + AMP + H(+). It catalyses the reaction N(tele)-phospho-L-histidyl/O-phospho-L-threonyl-[pyruvate, phosphate dikinase] + phosphate + H(+) = N(tele)-phospho-L-histidyl/L-threonyl-[pyruvate, phosphate dikinase] + diphosphate. Functionally, bifunctional serine/threonine kinase and phosphorylase involved in the regulation of the pyruvate, phosphate dikinase (PPDK) by catalyzing its phosphorylation/dephosphorylation. This Lactobacillus delbrueckii subsp. bulgaricus (strain ATCC BAA-365 / Lb-18) protein is Putative pyruvate, phosphate dikinase regulatory protein.